The sequence spans 123 residues: uncharacterized protein (123 aa).

The segment at 1–28 is disordered; sequence MGLGSSKRKEEPPHKSEPKTVGRVKRAG. The segment covering 7–20 has biased composition (basic and acidic residues); sequence KRKEEPPHKSEPKT.

The protein belongs to the TUSC2 family.

This is an uncharacterized protein from Caenorhabditis elegans.